The following is a 436-amino-acid chain: GTPase Der (436 aa).

2 EngA-type G domains span residues 4–167 (PTVA…PTEA) and 175–351 (IKFS…QSQN). Residues 10 to 17 (GRPNVGKS), 57 to 61 (DTGGI), 119 to 122 (NKVD), 181 to 188 (GRPNVGKS), 229 to 233 (DTAGM), and 294 to 297 (NKWD) each bind GTP. One can recognise a KH-like domain in the interval 352–436 (TRIPSAVLND…PIRLIARKRK (85 aa)).

Belongs to the TRAFAC class TrmE-Era-EngA-EngB-Septin-like GTPase superfamily. EngA (Der) GTPase family. As to quaternary structure, associates with the 50S ribosomal subunit.

Functionally, GTPase that plays an essential role in the late steps of ribosome biogenesis. The sequence is that of GTPase Der from Streptococcus mutans serotype c (strain ATCC 700610 / UA159).